The chain runs to 315 residues: Protein OPG185 (315 aa).

Positions 1–16 are cleaved as a signal peptide; the sequence is MARLPILLLLISLVYS. Residues 17–121 form the Ig-like V-type domain; that stretch reads TPSPQTSKKI…NDTDKVDYEE (105 aa). The Virion surface segment spans residues 17–279; the sequence is TPSPQTSKKI…SNYKTKDFVE (263 aa). C34 and C103 are oxidised to a cystine. N-linked (GlcNAc...) asparagine; by host glycans are attached at residues N37, N69, N112, and N161. Polar residues predominate over residues 192–202; the sequence is INTVSASSGES. A disordered region spans residues 192–214; sequence INTVSASSGESTTDETPEPITDK. A glycan (N-linked (GlcNAc...) asparagine; by host) is linked at N254. Residues 280–303 traverse the membrane as a helical segment; the sequence is IFGITALIILSAVAIFCITYYIYN. The Intravirion portion of the chain corresponds to 304–315; sequence KRSRKYKTENKV.

The protein belongs to the orthopoxvirus OPG185 family. In terms of assembly, heterodimerizes with OPG040. The heterodimer OPG185-OPG040 interacts with components of the entry fusion complex OPG143 and OPG094. Heterodimer with C3/VPC protein; disulfide-linked. Glycosylated; contains phosphate and sulfate-substituted glycans. O-glycosylation is required for hemagglutination and hemadsorption activities of infected cell membranes.

It localises to the virion membrane. The protein localises to the host membrane. Prevents cell to cell fusion by interacting with and directing the viral OPG040 protein on the host plasma membrane. The OPG185-OPG040 complex associates with components of the entry fusion complex (EFC) presumably to avoid superinfection and syncytium formation. Via its interaction with C3/VCP protein, protects the infected cell and probably also the extracellular enveloped virus from complement attack. This chain is Protein OPG185 (OPG185), found in Vaccinia virus (strain Tian Tan) (VACV).